We begin with the raw amino-acid sequence, 394 residues long: Flap endonuclease 1 (394 aa).

The segment at 1 to 104 is N-domain; that stretch reads MGIKQLFSII…GELAKRFQRK (104 aa). Asp34 lines the Mg(2+) pocket. Positions 47 and 70 each coordinate DNA. Residues Asp86, Glu158, Glu160, Asp179, and Asp181 each coordinate Mg(2+). The segment at 122 to 253 is I-domain; sequence DVEKFSRRTV…STALKLIREH (132 aa). Glu158 is a binding site for DNA. The DNA site is built by Gly231 and Asp233. Position 233 (Asp233) interacts with Mg(2+). Positions 341-349 are interaction with PCNA; the sequence is QQARIEGFF. A compositionally biased stretch (basic and acidic residues) spans 356-383; it reads EEEKKAHKRKLEEQAEQKRKKVKEEKKE. The interval 356 to 394 is disordered; sequence EEEKKAHKRKLEEQAEQKRKKVKEEKKEKAKLKAKPRGA. The segment covering 384–394 has biased composition (basic residues); that stretch reads KAKLKAKPRGA.

Belongs to the XPG/RAD2 endonuclease family. FEN1 subfamily. In terms of assembly, interacts with PCNA. Three molecules of FEN1 bind to one PCNA trimer with each molecule binding to one PCNA monomer. PCNA stimulates the nuclease activity without altering cleavage specificity. It depends on Mg(2+) as a cofactor. Phosphorylated. Phosphorylation upon DNA damage induces relocalization to the nuclear plasma.

Its subcellular location is the nucleus. The protein resides in the nucleolus. It localises to the nucleoplasm. It is found in the mitochondrion. Functionally, structure-specific nuclease with 5'-flap endonuclease and 5'-3' exonuclease activities involved in DNA replication and repair. During DNA replication, cleaves the 5'-overhanging flap structure that is generated by displacement synthesis when DNA polymerase encounters the 5'-end of a downstream Okazaki fragment. It enters the flap from the 5'-end and then tracks to cleave the flap base, leaving a nick for ligation. Also involved in the long patch base excision repair (LP-BER) pathway, by cleaving within the apurinic/apyrimidinic (AP) site-terminated flap. Acts as a genome stabilization factor that prevents flaps from equilibrating into structures that lead to duplications and deletions. Also possesses 5'-3' exonuclease activity on nicked or gapped double-stranded DNA, and exhibits RNase H activity. Also involved in replication and repair of rDNA and in repairing mitochondrial DNA. This Sordaria macrospora (strain ATCC MYA-333 / DSM 997 / K(L3346) / K-hell) protein is Flap endonuclease 1.